A 412-amino-acid polypeptide reads, in one-letter code: Imidazolonepropionase (412 aa).

His76 and His78 together coordinate Fe(3+). Zn(2+) is bound by residues His76 and His78. Residues Arg85, Tyr148, and His181 each contribute to the 4-imidazolone-5-propanoate site. Tyr148 serves as a coordination point for N-formimidoyl-L-glutamate. His242 lines the Fe(3+) pocket. Residue His242 participates in Zn(2+) binding. Residue Glu245 participates in 4-imidazolone-5-propanoate binding. Position 317 (Asp317) interacts with Fe(3+). Asp317 is a Zn(2+) binding site. N-formimidoyl-L-glutamate is bound by residues Asn319 and Gly321. Ser322 provides a ligand contact to 4-imidazolone-5-propanoate.

This sequence belongs to the metallo-dependent hydrolases superfamily. HutI family. Requires Zn(2+) as cofactor. Fe(3+) is required as a cofactor.

It is found in the cytoplasm. It carries out the reaction 4-imidazolone-5-propanoate + H2O = N-formimidoyl-L-glutamate. It participates in amino-acid degradation; L-histidine degradation into L-glutamate; N-formimidoyl-L-glutamate from L-histidine: step 3/3. Its function is as follows. Catalyzes the hydrolytic cleavage of the carbon-nitrogen bond in imidazolone-5-propanoate to yield N-formimidoyl-L-glutamate. It is the third step in the universal histidine degradation pathway. This Staphylococcus aureus (strain MSSA476) protein is Imidazolonepropionase.